We begin with the raw amino-acid sequence, 280 residues long: Apoptosis regulator ced-9 (280 aa).

Residues 33–59 are disordered; the sequence is GTEPTDFGINSDAQDLPSPSRQASTRR. Residues 43–59 are compositionally biased toward polar residues; the sequence is SDAQDLPSPSRQASTRR. The BH4 motif lies at 80 to 99; it reads IEGFVVDYFTHRIRQNGMEW. Positions 160–179 match the BH1 motif; sequence QTDQCPMSYGRLIGLISFGG. The short motif at 213-229 is the BH2 element; it reads NWKEHNRSWDDFMTLGK.

The protein belongs to the Bcl-2 family. As to quaternary structure, interacts with asymmetric homodimer ced-4; the interaction sequesters ced-4. Interacts with egl-1; the interaction results in ced-4 release. Interacts with dre-1; the interaction inhibits ced-9 activity, either directly or indirectly. Interacts with dct-1. May form a complex composed of ced-9, ced-4 and mac-1. Interacts with dynamin-related protein drp-1 (via residues 280-502); the interaction is enhanced by GTP rather than GDP; the interaction is probably direct and may occur at the mitochondrion. Interaction with drp-1 may be enhanced by interaction of ced-9 with egl-1, but not with ced-4. A ced-9/egl-1 complex may recruit drp-1 to the mitochondrial surface. Interacts with fzo-1; interaction may be suppressed by interaction of ced-9 with egl-1.

The protein resides in the perikaryon. It is found in the synapse. Its subcellular location is the endomembrane system. It localises to the mitochondrion membrane. The protein localises to the cytoplasm. Functionally, plays a major role in programmed cell death (PCD, apoptosis). egl-1 binds to and directly inhibits the activity of ced-9, releasing the cell death activator ced-4 from a ced-9/ced-4 containing protein complex and allowing ced-4 to activate the cell-killing caspase ced-3. During larval development, required for the elimination of transient presynaptic components downstream of egl-1 and upstream of ced-4 and ced-3 apoptotic pathway. Has been shown in one study to be dispensable in mitochondrial dynamics and morphology during early embryonic development. However, another study shows that a egl-1/ced-9 containing complex may promote drp-1-dependent mitochondrial fission. The sequence is that of Apoptosis regulator ced-9 (ced-9) from Caenorhabditis elegans.